The sequence spans 363 residues: UDP-3-O-acylglucosamine N-acyltransferase (363 aa).

Catalysis depends on histidine 266, which acts as the Proton acceptor.

It belongs to the transferase hexapeptide repeat family. LpxD subfamily. As to quaternary structure, homotrimer.

The enzyme catalyses a UDP-3-O-[(3R)-3-hydroxyacyl]-alpha-D-glucosamine + a (3R)-hydroxyacyl-[ACP] = a UDP-2-N,3-O-bis[(3R)-3-hydroxyacyl]-alpha-D-glucosamine + holo-[ACP] + H(+). Its pathway is bacterial outer membrane biogenesis; LPS lipid A biosynthesis. Its function is as follows. Catalyzes the N-acylation of UDP-3-O-acylglucosamine using 3-hydroxyacyl-ACP as the acyl donor. Is involved in the biosynthesis of lipid A, a phosphorylated glycolipid that anchors the lipopolysaccharide to the outer membrane of the cell. The sequence is that of UDP-3-O-acylglucosamine N-acyltransferase from Bordetella pertussis (strain Tohama I / ATCC BAA-589 / NCTC 13251).